The chain runs to 412 residues: AA9 family lytic polysaccharide monooxygenase A (412 aa).

A signal peptide spans 1 to 20 (MKTTTYSLLALAAASKLASA). Residues histidine 21 and histidine 103 each coordinate Cu(2+). Residues cysteine 63 and cysteine 186 are joined by a disulfide bond. The N-linked (GlcNAc...) asparagine glycan is linked to asparagine 151. Histidine 172 is an O2 binding site. Tyrosine 183 contacts Cu(2+). N-linked (GlcNAc...) asparagine glycosylation is found at asparagine 334 and asparagine 385. In terms of domain architecture, CBM1 spans 373–409 (GVAKMYERCGGINHTGPTTCESGSVCKKWNPYYYQCV).

The protein belongs to the polysaccharide monooxygenase AA9 family. Requires Cu(2+) as cofactor.

It is found in the secreted. It carries out the reaction [(1-&gt;4)-beta-D-glucosyl]n+m + reduced acceptor + O2 = 4-dehydro-beta-D-glucosyl-[(1-&gt;4)-beta-D-glucosyl]n-1 + [(1-&gt;4)-beta-D-glucosyl]m + acceptor + H2O.. Lytic polysaccharide monooxygenase (LPMO) that depolymerizes crystalline and amorphous polysaccharides via the oxidation of scissile alpha- or beta-(1-4)-glycosidic bonds, yielding C4 oxidation products. Catalysis by LPMOs requires the reduction of the active-site copper from Cu(II) to Cu(I) by a reducing agent and H(2)O(2) or O(2) as a cosubstrate. In Aspergillus niger (strain ATCC MYA-4892 / CBS 513.88 / FGSC A1513), this protein is AA9 family lytic polysaccharide monooxygenase A (eglD).